Consider the following 316-residue polypeptide: Arabinooligosaccharides transport system permease protein AraP (316 aa).

7 consecutive transmembrane segments (helical) span residues 32–52 (VVPY…SFYP), 94–114 (TYMI…AVLL), 128–148 (ALFL…RLMF), 178–198 (MFLM…LYFL), 224–244 (FYVT…ISVI), 254–274 (FVFW…GYLY), and 283–303 (MGFG…ISIT). In terms of domain architecture, ABC transmembrane type-1 spans 89-304 (LQNTTTYMIL…LIIFVISITQ (216 aa)).

Belongs to the binding-protein-dependent transport system permease family. MalFG subfamily. In terms of assembly, the complex is composed of two ATP-binding proteins (MsmX), two transmembrane proteins (AraP and AraQ) and a solute-binding protein (AraN).

It localises to the cell membrane. Functionally, part of the ABC transporter complex AraNPQ involved in the uptake of arabinooligosaccharides. Responsible for the translocation of the substrate across the membrane. This is Arabinooligosaccharides transport system permease protein AraP (araP) from Halalkalibacterium halodurans (strain ATCC BAA-125 / DSM 18197 / FERM 7344 / JCM 9153 / C-125) (Bacillus halodurans).